We begin with the raw amino-acid sequence, 441 residues long: 23S rRNA (uracil(1939)-C(5))-methyltransferase RlmD (441 aa).

Residues 1 to 56 (MSIDSLDMEARGVGRLLNEDGTPGKVIFVEGALPGETVSYRSFRRKPSYEQAHLVE) form the TRAM domain. [4Fe-4S] cluster is bound by residues Cys-69, Cys-75, Cys-78, and Cys-157. Gln-265, Phe-294, Asn-299, Glu-315, Asn-343, and Asp-364 together coordinate S-adenosyl-L-methionine. The Nucleophile role is filled by Cys-397.

It belongs to the class I-like SAM-binding methyltransferase superfamily. RNA M5U methyltransferase family. RlmD subfamily.

The enzyme catalyses uridine(1939) in 23S rRNA + S-adenosyl-L-methionine = 5-methyluridine(1939) in 23S rRNA + S-adenosyl-L-homocysteine + H(+). Catalyzes the formation of 5-methyl-uridine at position 1939 (m5U1939) in 23S rRNA. The sequence is that of 23S rRNA (uracil(1939)-C(5))-methyltransferase RlmD from Cupriavidus necator (strain ATCC 17699 / DSM 428 / KCTC 22496 / NCIMB 10442 / H16 / Stanier 337) (Ralstonia eutropha).